The primary structure comprises 241 residues: Hydantoin racemase (241 aa).

Belongs to the HyuE racemase family. As to quaternary structure, homotetramer.

The catalysed reaction is a D-5-monosubstituted hydantoin = a L-5-monosubstituted hydantoin. It catalyses the reaction D-5-benzylhydantoin = L-5-benzylhydantoin. It carries out the reaction D-5-isobutylhydantoin = L-5-isobutylhydantoin. Inhibited by Cu(2+), Hg(2+), Pb(2+) and Zn(2+). The activity is twofold lower in the presence of Mn(2+), Co(2+) and Ni(2+). The insignificant effect of the metal chelating agent EDTA on the hydantoin racemase activity would indicate that it is not a metalloenzyme. Its function is as follows. May be involved in the asymmetric conversion of racemic 5-substituted hydantoins to the corresponding L-amino acids. Catalyzes the racemization via enolization of D- and L-5-monosubstituted hydantoins. The protein is Hydantoin racemase of Rhizobium meliloti (Ensifer meliloti).